Reading from the N-terminus, the 66-residue chain is Small ribosomal subunit protein bS21 (66 aa).

This sequence belongs to the bacterial ribosomal protein bS21 family.

This chain is Small ribosomal subunit protein bS21, found in Rickettsia felis (strain ATCC VR-1525 / URRWXCal2) (Rickettsia azadi).